We begin with the raw amino-acid sequence, 314 residues long: Olfactory receptor 5P62 (314 aa).

At 1 to 28 (MAFIYNGSQTTVTEFILLGLTDDPVLKV) the chain is on the extracellular side. The N-linked (GlcNAc...) asparagine glycan is linked to Asn6. Residues 29–49 (ILFCIILCIYLVTVFGNLSTI) form a helical membrane-spanning segment. Over 50 to 57 (LLIGVSSK) the chain is Cytoplasmic. Residues 58 to 78 (LHHPMYFFLSHLASVDMGLSS) form a helical membrane-spanning segment. Over 79 to 102 (SVTPNMLVNFLTEKNTISYLGCGI) the chain is Extracellular. Cys100 and Cys192 are joined by a disulfide. The chain crosses the membrane as a helical span at residues 103-123 (QLSSAAFFGAVEFFLLAAMAY). The Cytoplasmic portion of the chain corresponds to 124-136 (DRLVAICNPLLYS). A helical membrane pass occupies residues 137 to 157 (TKMSSQVCIQLVAGSYVGGFL). Residues 158–199 (NASFVTHFFFSFLFCGPNRVNHFFCDLSPMMELSCSDVSISE) are Extracellular-facing. A helical transmembrane segment spans residues 200–220 (IVISFSAGSFTMTTLFVIVIP). At 221–240 (YFYIFITILKIRSTEGRQKA) the chain is on the cytoplasmic side. Residues 241 to 261 (FSTCTSHLTAVTLYYGTIIFI) traverse the membrane as a helical segment. Over 262–274 (YVMPKSTYSRDQN) the chain is Extracellular. Residues 275–295 (KVVSLFYMLVIPVLNPLIYSL) form a helical membrane-spanning segment. Residues 296 to 314 (RNNEIKDALKRQFYRKTLL) lie on the Cytoplasmic side of the membrane.

Belongs to the G-protein coupled receptor 1 family.

Its subcellular location is the cell membrane. Its function is as follows. Potential odorant receptor. The protein is Olfactory receptor 5P62 of Mus musculus (Mouse).